We begin with the raw amino-acid sequence, 133 residues long: Probable mitochondrial pyruvate carrier 2 (133 aa).

A run of 3 helical transmembrane segments spans residues 40–57 (VFFWAPTIKWTLIGAGLA), 73–91 (ALFATGAIWTRYCLVITPI), and 100–116 (FFVMCTGLAQLCRIAHY).

The protein belongs to the mitochondrial pyruvate carrier (MPC) (TC 2.A.105) family.

It is found in the mitochondrion inner membrane. May mediate the uptake of pyruvate into mitochondria. The chain is Probable mitochondrial pyruvate carrier 2 from Caenorhabditis elegans.